A 424-amino-acid polypeptide reads, in one-letter code: Dihydroorotase-like protein (424 aa).

The protein belongs to the metallo-dependent hydrolases superfamily. DHOase family. PyrC' subfamily. As to quaternary structure, heterododecamer of 6 active PyrB subunits and 6 non-catalytic PyrC' subunits.

In terms of biological role, non-functional DHOase. The polypeptide is Dihydroorotase-like protein (Pseudomonas putida (Arthrobacter siderocapsulatus)).